The following is a 523-amino-acid chain: Coatomer subunit delta-2 (523 aa).

The disordered stretch occupies residues Asp218–Leu243. Residues Ser282–Val523 enclose the MHD domain.

It belongs to the adaptor complexes medium subunit family. Delta-COP subfamily. In terms of assembly, oligomeric complex that consists of at least the alpha, beta, beta', gamma, delta, epsilon and zeta subunits.

The protein resides in the cytoplasm. It localises to the golgi apparatus membrane. Its subcellular location is the cytoplasmic vesicle. It is found in the COPI-coated vesicle membrane. The coatomer is a cytosolic protein complex that binds to dilysine motifs and reversibly associates with Golgi non-clathrin-coated vesicles, which further mediate biosynthetic protein transport from the ER, via the Golgi up to the trans Golgi network. Coatomer complex is required for budding from Golgi membranes, and is essential for the retrograde Golgi-to-ER transport of dilysine-tagged proteins. The polypeptide is Coatomer subunit delta-2 (Oryza sativa subsp. japonica (Rice)).